A 595-amino-acid polypeptide reads, in one-letter code: CDPK-related kinase 3 (595 aa).

The tract at residues 1-131 (MGQCYGKVNQ…GTEPEQSLDK (131 aa)) is disordered. G2 carries the N-myristoyl glycine lipid modification. The segment covering 20-37 (NTTTYVVSGDGNQIQPLT) has biased composition (polar residues). A compositionally biased stretch (basic and acidic residues) spans 111–124 (KPKEGPIPEERGTE). Positions 143-405 (YELGKEVGRG…AVQALTHPWL (263 aa)) constitute a Protein kinase domain. ATP contacts are provided by residues 149–157 (VGRGHFGHT) and K175. D271 functions as the Proton acceptor in the catalytic mechanism. S311 is subject to Phosphoserine. S353 carries the phosphoserine; by CPK1 and CPK34 modification. Residues 409–439 (SRVIPLDILIYKLVKAYLHATPLRRAALKAL) form an autoinhibitory domain region. A calmodulin binding (CaMBD) region spans residues 428–448 (ATPLRRAALKALAKALTENEL). EF-hand domains are found at residues 446–482 (NELVYLRAQFMLLGPNKDGSVSLENFKTALMQNATDA), 483–518 (MRESRVPEILHTMESLAYRKMYFEEFCAAAISIHQL), 519–558 (EAVDAWEEIATAGFQHFETEGNRVITIEELARELNVGASA), and 559–588 (YGHLRDWVRSSDGKLSYLGFTKFLHGVTLR). Positions 461, 463, 465, 502, 507, 540, 547, 568, 570, and 572 each coordinate Ca(2+). Position 574 is a phosphoserine (S574).

This sequence belongs to the protein kinase superfamily. Ser/Thr protein kinase family. CDPK subfamily. In terms of assembly, binds calmodulin (CaM) in a calcium-dependent manner. Interacts with GLN1-1. Post-translationally, autophosphorylated. In terms of tissue distribution, ubiquitously expressed with higher levels in siliques and roots, especially at the root cap. Particularly present in vascular bundles of stems and leaves.

Its subcellular location is the cytoplasm. The protein localises to the membrane. It catalyses the reaction L-seryl-[protein] + ATP = O-phospho-L-seryl-[protein] + ADP + H(+). The catalysed reaction is L-threonyl-[protein] + ATP = O-phospho-L-threonyl-[protein] + ADP + H(+). With respect to regulation, not activated by calcium. Autophosphorylation may play an important role in the regulation of the kinase activity. Stimulated by magnesium ions (optimum at 10-15 mM) and manganese ions. Functionally, may play a role in signal transduction pathways that involve calcium as a second messenger. Serine/threonine kinase that phosphorylates histone H3 an GLN1-1. The chain is CDPK-related kinase 3 (CRK3) from Arabidopsis thaliana (Mouse-ear cress).